Consider the following 296-residue polypeptide: ATP synthase gamma chain (296 aa).

This sequence belongs to the ATPase gamma chain family. As to quaternary structure, F-type ATPases have 2 components, CF(1) - the catalytic core - and CF(0) - the membrane proton channel. CF(1) has five subunits: alpha(3), beta(3), gamma(1), delta(1), epsilon(1). CF(0) has three main subunits: a, b and c.

It is found in the cell membrane. Produces ATP from ADP in the presence of a proton gradient across the membrane. The gamma chain is believed to be important in regulating ATPase activity and the flow of protons through the CF(0) complex. The protein is ATP synthase gamma chain of Pseudarthrobacter chlorophenolicus (strain ATCC 700700 / DSM 12829 / CIP 107037 / JCM 12360 / KCTC 9906 / NCIMB 13794 / A6) (Arthrobacter chlorophenolicus).